Reading from the N-terminus, the 328-residue chain is GMP reductase (328 aa).

Cys-176 (thioimidate intermediate) is an active-site residue. 205–228 (IIADGGIRTHGDVAKSIRFGATMV) contributes to the NADP(+) binding site.

This sequence belongs to the IMPDH/GMPR family. GuaC type 2 subfamily.

It carries out the reaction IMP + NH4(+) + NADP(+) = GMP + NADPH + 2 H(+). Functionally, catalyzes the irreversible NADPH-dependent deamination of GMP to IMP. It functions in the conversion of nucleobase, nucleoside and nucleotide derivatives of G to A nucleotides, and in maintaining the intracellular balance of A and G nucleotides. This Bacillus cereus (strain ATCC 14579 / DSM 31 / CCUG 7414 / JCM 2152 / NBRC 15305 / NCIMB 9373 / NCTC 2599 / NRRL B-3711) protein is GMP reductase.